We begin with the raw amino-acid sequence, 138 residues long: Putative esterase HI_1161 (138 aa).

Belongs to the thioesterase PaaI family.

This chain is Putative esterase HI_1161, found in Haemophilus influenzae (strain ATCC 51907 / DSM 11121 / KW20 / Rd).